The sequence spans 229 residues: DNA mismatch repair protein MutH (229 aa).

This sequence belongs to the MutH family.

Its subcellular location is the cytoplasm. Its function is as follows. Sequence-specific endonuclease that cleaves unmethylated GATC sequences. It is involved in DNA mismatch repair. The chain is DNA mismatch repair protein MutH from Escherichia coli O17:K52:H18 (strain UMN026 / ExPEC).